A 414-amino-acid chain; its full sequence is Cytochrome P450 CYP105Q4 (414 aa).

Polar residues predominate over residues Met1–Thr12. A disordered region spans residues Met1–Met21. Residues His108, Gln302, Arg304, His361, and Cys363 each contribute to the heme site.

This sequence belongs to the cytochrome P450 family. The cofactor is heme.

Its function is as follows. Can bind oleic-acid derivatives, amphotericin B like precursors and a variety of nitrogen ligand donors. The chain is Cytochrome P450 CYP105Q4 from Mycobacterium marinum (strain ATCC BAA-535 / M).